The primary structure comprises 227 residues: Triosephosphate isomerase (227 aa).

9 to 11 (NFK) lines the substrate pocket. H93 functions as the Electrophile in the catalytic mechanism. E141 (proton acceptor) is an active-site residue. Residues I146, G180, and 201-202 (AS) each bind substrate.

It belongs to the triosephosphate isomerase family. As to quaternary structure, homotetramer; dimer of dimers.

It is found in the cytoplasm. It carries out the reaction D-glyceraldehyde 3-phosphate = dihydroxyacetone phosphate. The protein operates within carbohydrate biosynthesis; gluconeogenesis. It functions in the pathway carbohydrate degradation; glycolysis; D-glyceraldehyde 3-phosphate from glycerone phosphate: step 1/1. Functionally, involved in the gluconeogenesis. Catalyzes stereospecifically the conversion of dihydroxyacetone phosphate (DHAP) to D-glyceraldehyde-3-phosphate (G3P). The protein is Triosephosphate isomerase of Saccharolobus solfataricus (strain ATCC 35092 / DSM 1617 / JCM 11322 / P2) (Sulfolobus solfataricus).